A 335-amino-acid polypeptide reads, in one-letter code: NAC domain-containing protein 60 (335 aa).

The 143-residue stretch at 14 to 156 folds into the NAC domain; it reads TFPGFKFSPT…ALVICRLRRN (143 aa). The DNA-binding element occupies 112-162; sequence IGTKRTLVFHIGRAPKGGRTEWLMHEYCMIGVSLDALVICRLRRNTEFQGS. The helical transmembrane segment at 315–335 threads the bilayer; that stretch reads ARWDVVVWLLVMIAVLVFYLV.

As to expression, expressed in roots, rosette leaves, cauline leaves, shoot apex, stems and flowers.

Its subcellular location is the membrane. The protein localises to the nucleus. In terms of biological role, transcriptional activator activated by proteolytic cleavage through regulated intramembrane proteolysis (RIP). Transcription factor involved in modulation of abscisic acid (ABA) signaling. Attenuates ABA sensitivity and glucose-induced ABA accumulation. Reduces the expression of ABI4 gene. The chain is NAC domain-containing protein 60 from Arabidopsis thaliana (Mouse-ear cress).